The following is a 204-amino-acid chain: Large ribosomal subunit protein eL15z (204 aa).

Belongs to the eukaryotic ribosomal protein eL15 family.

In Picea mariana (Black spruce), this protein is Large ribosomal subunit protein eL15z (SB61).